The chain runs to 533 residues: MEFSSFLFTILLFSLNISPLVSAHGSNHEDFLKCLSYRMNDNTVEPKVIHTSKDSSFFSILDSSIQNPRFSVSETPKPVSIITPVKASDVQTVIRCAQLHGIHVRTRSAGHCYEGLSYIAYNKPFAVIDLRNLRSISLDVDNRTGWVQTGATAGELYYEIGKTTKSLAFPAGIHPTVGVGGQFSGGGYGTLLRKYGLAADNIIDALVVDASGRILDRQAMGEDYFWAIRGGGGSSFGVILSWKVKLVDVPSTITVFKVQKTSKKEAVRIIKKWQYAADKVPDDLFIRTTLERSNKNAVHALFTGLYIGPVNNLLALMEEKFPELGLEKEGCEEMSWIESVLWFADFPKGESLGVLTNRERTSLSFKGKDDFVQEPIPEAAIQEIWRRLEAPEARLGKIILTPFGGKMSEMAEYETPFPHRGGNLYEIQYVAYWREEEDKNKTETDKYLKWVDSVYEFMTPYVSKSPRGAYVNFKDMDLGMYLGKKKTKYEEGKSWGVKYFKNNFERLVRVKTRVDPTDFFCDEQSIPLVNKVT.

A signal peptide spans 1–23 (MEFSSFLFTILLFSLNISPLVSA). A disulfide bridge links Cys34 with Cys96. The region spanning 74–249 (ETPKPVSIIT…LSWKVKLVDV (176 aa)) is the FAD-binding PCMH-type domain. Residue His111 is modified to Pros-8alpha-FAD histidine. 2 N-linked (GlcNAc...) asparagine glycosylation sites follow: Asn142 and Asn440.

The protein belongs to the oxygen-dependent FAD-linked oxidoreductase family. Requires FAD as cofactor.

It localises to the secreted. Its subcellular location is the cell wall. Its function is as follows. Involved in adaptation to salt stress. In Arabidopsis thaliana (Mouse-ear cress), this protein is Berberine bridge enzyme-like 28.